The following is a 122-amino-acid chain: Serum amyloid A-2 protein (122 aa).

The first 19 residues, 1–19, serve as a signal peptide directing secretion; the sequence is MKLLTSLVFCSLLLGVCHG. Residues 89 to 108 show a composition bias toward basic and acidic residues; that stretch reads RGHEDTMADQEANRHGRSGK. The interval 89–122 is disordered; that stretch reads RGHEDTMADQEANRHGRSGKDPNYYRPPGLPAKY.

Belongs to the SAA family. In terms of assembly, apolipoprotein of the HDL complex. As to expression, expressed by the liver; secreted in plasma.

Its subcellular location is the secreted. Its function is as follows. Major acute phase reactant. The polypeptide is Serum amyloid A-2 protein (Mus musculus (Mouse)).